The following is a 246-amino-acid chain: Bis(5'-nucleosyl)-tetraphosphatase PrpE [asymmetrical] (246 aa).

The protein belongs to the PrpE family. Ni(2+) is required as a cofactor.

The enzyme catalyses P(1),P(4)-bis(5'-guanosyl) tetraphosphate + H2O = GMP + GTP + 2 H(+). Asymmetrically hydrolyzes Ap4p to yield AMP and ATP. The polypeptide is Bis(5'-nucleosyl)-tetraphosphatase PrpE [asymmetrical] (Bacillus thuringiensis (strain Al Hakam)).